A 273-amino-acid polypeptide reads, in one-letter code: 4-hydroxy-tetrahydrodipicolinate reductase (273 aa).

Position 11 to 16 (G11 to M16) interacts with NAD(+). Residue R37 participates in NADP(+) binding. Residues G100–T102 and A124–Y127 each bind NAD(+). The active-site Proton donor/acceptor is the H157. Residue H158 coordinates (S)-2,3,4,5-tetrahydrodipicolinate. K161 serves as the catalytic Proton donor. G167–T168 is a binding site for (S)-2,3,4,5-tetrahydrodipicolinate.

This sequence belongs to the DapB family.

Its subcellular location is the cytoplasm. It carries out the reaction (S)-2,3,4,5-tetrahydrodipicolinate + NAD(+) + H2O = (2S,4S)-4-hydroxy-2,3,4,5-tetrahydrodipicolinate + NADH + H(+). The enzyme catalyses (S)-2,3,4,5-tetrahydrodipicolinate + NADP(+) + H2O = (2S,4S)-4-hydroxy-2,3,4,5-tetrahydrodipicolinate + NADPH + H(+). The protein operates within amino-acid biosynthesis; L-lysine biosynthesis via DAP pathway; (S)-tetrahydrodipicolinate from L-aspartate: step 4/4. Catalyzes the conversion of 4-hydroxy-tetrahydrodipicolinate (HTPA) to tetrahydrodipicolinate. The polypeptide is 4-hydroxy-tetrahydrodipicolinate reductase (Acinetobacter baumannii (strain AB307-0294)).